Consider the following 338-residue polypeptide: Tetraacyldisaccharide 4'-kinase (338 aa).

Residue 63–70 (TVGGSGKT) participates in ATP binding.

The protein belongs to the LpxK family.

The catalysed reaction is a lipid A disaccharide + ATP = a lipid IVA + ADP + H(+). It functions in the pathway glycolipid biosynthesis; lipid IV(A) biosynthesis; lipid IV(A) from (3R)-3-hydroxytetradecanoyl-[acyl-carrier-protein] and UDP-N-acetyl-alpha-D-glucosamine: step 6/6. Functionally, transfers the gamma-phosphate of ATP to the 4'-position of a tetraacyldisaccharide 1-phosphate intermediate (termed DS-1-P) to form tetraacyldisaccharide 1,4'-bis-phosphate (lipid IVA). The chain is Tetraacyldisaccharide 4'-kinase from Shewanella loihica (strain ATCC BAA-1088 / PV-4).